The following is a 1073-amino-acid chain: Semaphorin-6D (1073 aa).

An N-terminal signal peptide occupies residues 1 to 20 (MGFLLLWFCVLFLLVSRLRA). The Extracellular portion of the chain corresponds to 21-662 (VSFPEDDEPL…GESNQMVHMN (642 aa)). The Sema domain occupies 27–512 (DEPLNTVDYH…FSSCVVRIPL (486 aa)). Asn51 carries N-linked (GlcNAc...) asparagine glycosylation. Cystine bridges form between Cys108/Cys118, Cys136/Cys145, Cys259/Cys370, and Cys284/Cys329. The N-linked (GlcNAc...) asparagine glycan is linked to Asn283. 2 N-linked (GlcNAc...) asparagine glycosylation sites follow: Asn435 and Asn461. Intrachain disulfides connect Cys477–Cys506, Cys515–Cys533, Cys521–Cys568, and Cys525–Cys541. Residues 514–569 (RCERYGSCKKSCIASRDPYCGWLSQGVCERVTLGMLPGGYEQDTEYGNTAHLGDCH) form the PSI domain. The N-linked (GlcNAc...) asparagine glycan is linked to Asn631. A helical transmembrane segment spans residues 663–683 (VLITCVFAAFVLGAFIAGVAV). Over 684-1073 (YCYRDMFVRK…SVRPLNKYTY (390 aa)) the chain is Cytoplasmic. Residues Ser723, Ser734, and Ser744 each carry the phosphoserine modification. Disordered stretches follow at residues 745–825 (RKEL…GHIP), 839–876 (TSFS…VDSR), 919–986 (PPKV…SPNG), and 1021–1073 (LQPS…KYTY). Position 773 is a phosphothreonine (Thr773). Over residues 790 to 806 (SHSEKAHSHGASRKEHP) the composition is skewed to basic and acidic residues. 3 positions are modified to phosphoserine: Ser931, Ser957, and Ser983. Residues 931–942 (SPPSTLPRNSPT) are compositionally biased toward polar residues. Polar residues-rich tracts occupy residues 1021–1037 (LQPS…NGTL) and 1059–1073 (VPQT…KYTY).

This sequence belongs to the semaphorin family. In terms of tissue distribution, expressed in brain and lung.

The protein localises to the cell membrane. Its function is as follows. Shows growth cone collapsing activity on dorsal root ganglion (DRG) neurons in vitro. May be a stop signal for the DRG neurons in their target areas, and possibly also for other neurons. May also be involved in the maintenance and remodeling of neuronal connections. Ligand of TREM2 with PLXNA1 as coreceptor in dendritic cells, plays a role in the generation of immune responses and skeletal homeostasis. This is Semaphorin-6D (Sema6d) from Mus musculus (Mouse).